The sequence spans 212 residues: Imidazole glycerol phosphate synthase subunit HisH (212 aa).

The region spanning 3 to 211 (LIAVIDYDMG…VQQVQKLALV (209 aa)) is the Glutamine amidotransferase type-1 domain. C81 serves as the catalytic Nucleophile. Catalysis depends on residues H186 and E188.

As to quaternary structure, heterodimer of HisH and HisF.

The protein resides in the cytoplasm. The enzyme catalyses 5-[(5-phospho-1-deoxy-D-ribulos-1-ylimino)methylamino]-1-(5-phospho-beta-D-ribosyl)imidazole-4-carboxamide + L-glutamine = D-erythro-1-(imidazol-4-yl)glycerol 3-phosphate + 5-amino-1-(5-phospho-beta-D-ribosyl)imidazole-4-carboxamide + L-glutamate + H(+). The catalysed reaction is L-glutamine + H2O = L-glutamate + NH4(+). The protein operates within amino-acid biosynthesis; L-histidine biosynthesis; L-histidine from 5-phospho-alpha-D-ribose 1-diphosphate: step 5/9. Functionally, IGPS catalyzes the conversion of PRFAR and glutamine to IGP, AICAR and glutamate. The HisH subunit catalyzes the hydrolysis of glutamine to glutamate and ammonia as part of the synthesis of IGP and AICAR. The resulting ammonia molecule is channeled to the active site of HisF. In Microcystis aeruginosa (strain NIES-843 / IAM M-2473), this protein is Imidazole glycerol phosphate synthase subunit HisH.